Reading from the N-terminus, the 99-residue chain is Small ribosomal subunit protein uS17 (99 aa).

This sequence belongs to the universal ribosomal protein uS17 family. In terms of assembly, part of the 30S ribosomal subunit.

Its function is as follows. One of the primary rRNA binding proteins, it binds specifically to the 5'-end of 16S ribosomal RNA. The chain is Small ribosomal subunit protein uS17 from Thermosipho melanesiensis (strain DSM 12029 / CIP 104789 / BI429).